Here is a 37-residue protein sequence, read N- to C-terminus: Large ribosomal subunit protein bL36 (37 aa).

Belongs to the bacterial ribosomal protein bL36 family.

The protein is Large ribosomal subunit protein bL36 of Hydrogenobaculum sp. (strain Y04AAS1).